Reading from the N-terminus, the 40-residue chain is Acyl-CoA-binding protein 2 (40 aa).

Basic and acidic residues predominate over residues 1-15 (ALKEEFEEHAEKAKT). The segment at 1–25 (ALKEEFEEHAEKAKTLPENTSSENK) is disordered. Positions 2-40 (LKEEFEEHAEKAKTLPENTSSENKLTLYGLYKQATVGNV) constitute an ACB domain.

This sequence belongs to the ACBP family.

It localises to the cytoplasm. In terms of biological role, binds medium- and long-chain acyl-CoA esters with very high affinity and may function as an intracellular carrier of acyl-CoA esters. This is Acyl-CoA-binding protein 2 from Digitalis lanata (Grecian foxglove).